The primary structure comprises 129 residues: Translation initiation factor 5A (129 aa).

K36 bears the Hypusine mark.

It belongs to the eIF-5A family.

The protein resides in the cytoplasm. Functions by promoting the formation of the first peptide bond. In Picrophilus torridus (strain ATCC 700027 / DSM 9790 / JCM 10055 / NBRC 100828 / KAW 2/3), this protein is Translation initiation factor 5A.